A 190-amino-acid polypeptide reads, in one-letter code: Potassium-transporting ATPase KdpC subunit (190 aa).

Residues 10-30 form a helical membrane-spanning segment; the sequence is VLFAVLTLICGVIYPYAITGI.

This sequence belongs to the KdpC family. As to quaternary structure, the system is composed of three essential subunits: KdpA, KdpB and KdpC.

It localises to the cell inner membrane. Its function is as follows. Part of the high-affinity ATP-driven potassium transport (or Kdp) system, which catalyzes the hydrolysis of ATP coupled with the electrogenic transport of potassium into the cytoplasm. This subunit acts as a catalytic chaperone that increases the ATP-binding affinity of the ATP-hydrolyzing subunit KdpB by the formation of a transient KdpB/KdpC/ATP ternary complex. This is Potassium-transporting ATPase KdpC subunit from Herminiimonas arsenicoxydans.